The chain runs to 149 residues: Protein DOWN-REGULATED IN DIF1 11 (149 aa).

An N-terminal signal peptide occupies residues 1–22 (MEKAILITFLIATTSMVYQTIG).

As to expression, mostly expressed in embryo sac cells. Restricted to synergid cells, especially in the filiform apparatus of mature female gametophyte, via MYB98-mediated transcription regulation. Also detected at low levels in egg and central cells.

In Arabidopsis thaliana (Mouse-ear cress), this protein is Protein DOWN-REGULATED IN DIF1 11.